The sequence spans 536 residues: Putative UDP-glucuronosyltransferase ugt-47 (536 aa).

The N-terminal stretch at 1–21 is a signal peptide; sequence MFRYHSILLLAILYFFEYGLA. N-linked (GlcNAc...) asparagine glycosylation is found at asparagine 52 and asparagine 308. The chain crosses the membrane as a helical span at residues 497 to 517; it reads IIVPCFFVAFYFIIFPFFKLF.

This sequence belongs to the UDP-glycosyltransferase family.

The protein resides in the membrane. The catalysed reaction is glucuronate acceptor + UDP-alpha-D-glucuronate = acceptor beta-D-glucuronoside + UDP + H(+). The chain is Putative UDP-glucuronosyltransferase ugt-47 (ugt-47) from Caenorhabditis elegans.